A 250-amino-acid polypeptide reads, in one-letter code: NH(3)-dependent NAD(+) synthetase (250 aa).

An ATP-binding site is contributed by 30 to 37 (GVSGGIDS). Mg(2+) is bound at residue D36. R117 serves as a coordination point for deamido-NAD(+). Position 137 (T137) interacts with ATP. Mg(2+) is bound at residue E142. Deamido-NAD(+) is bound by residues K150 and D157. ATP is bound by residues K166 and S188. Residue 234–235 (HK) coordinates deamido-NAD(+).

This sequence belongs to the NAD synthetase family. Homodimer.

It catalyses the reaction deamido-NAD(+) + NH4(+) + ATP = AMP + diphosphate + NAD(+) + H(+). It functions in the pathway cofactor biosynthesis; NAD(+) biosynthesis; NAD(+) from deamido-NAD(+) (ammonia route): step 1/1. Its function is as follows. Catalyzes the ATP-dependent amidation of deamido-NAD to form NAD. Uses ammonia as a nitrogen source. This Mannheimia succiniciproducens (strain KCTC 0769BP / MBEL55E) protein is NH(3)-dependent NAD(+) synthetase.